Here is a 330-residue protein sequence, read N- to C-terminus: Flotillin-like protein FloA (330 aa).

2 consecutive transmembrane segments (helical) span residues 5-25 (IILP…LFTF) and 28-48 (VALW…TLIG).

Belongs to the flotillin-like FloA family. Homooligomerizes.

The protein resides in the cell membrane. Its subcellular location is the membrane raft. Functionally, found in functional membrane microdomains (FMM) that may be equivalent to eukaryotic membrane rafts. FMMs are highly dynamic and increase in number as cells age. Flotillins are thought to be important factors in membrane fluidity. The protein is Flotillin-like protein FloA of Oceanobacillus iheyensis (strain DSM 14371 / CIP 107618 / JCM 11309 / KCTC 3954 / HTE831).